A 228-amino-acid polypeptide reads, in one-letter code: MEYSVVIPAAGQGKRMRAGHNKQFIELGGKPILAHTLAVFEQDDWCTNVVIVANEQEIEEMGELANRYQISKAKKIVAGGRERQESVFAGLKALSQDGLVLIHDGARPFVTEKEIHSLVETAAKTHAAVLAVPVKDTIKRVEGEAVLETMPREELWAVQTPQAFDLALIKQAHQKAENEQMLGTDDASLMEWLGYSVAVVQGSYFNFKLTTPEDLLFAEAILAEKERR.

The protein belongs to the IspD/TarI cytidylyltransferase family. IspD subfamily.

It catalyses the reaction 2-C-methyl-D-erythritol 4-phosphate + CTP + H(+) = 4-CDP-2-C-methyl-D-erythritol + diphosphate. Its pathway is isoprenoid biosynthesis; isopentenyl diphosphate biosynthesis via DXP pathway; isopentenyl diphosphate from 1-deoxy-D-xylulose 5-phosphate: step 2/6. Its function is as follows. Catalyzes the formation of 4-diphosphocytidyl-2-C-methyl-D-erythritol from CTP and 2-C-methyl-D-erythritol 4-phosphate (MEP). The chain is 2-C-methyl-D-erythritol 4-phosphate cytidylyltransferase from Halalkalibacterium halodurans (strain ATCC BAA-125 / DSM 18197 / FERM 7344 / JCM 9153 / C-125) (Bacillus halodurans).